Reading from the N-terminus, the 148-residue chain is uncharacterized protein (148 aa).

One can recognise an N-acetyltransferase domain in the interval 1-144; sequence MNIKRITTEA…PHVLMTKEIS (144 aa).

This is an uncharacterized protein from Bacillus subtilis (strain 168).